An 82-amino-acid polypeptide reads, in one-letter code: Putative membrane protein insertion efficiency factor (82 aa).

This sequence belongs to the UPF0161 family.

It is found in the cell inner membrane. Its function is as follows. Could be involved in insertion of integral membrane proteins into the membrane. The chain is Putative membrane protein insertion efficiency factor from Rickettsia africae (strain ESF-5).